The chain runs to 269 residues: Putative pyruvate, phosphate dikinase regulatory protein (269 aa).

Residue 153–160 (GVSRTSKT) coordinates ADP.

This sequence belongs to the pyruvate, phosphate/water dikinase regulatory protein family. PDRP subfamily.

It carries out the reaction N(tele)-phospho-L-histidyl/L-threonyl-[pyruvate, phosphate dikinase] + ADP = N(tele)-phospho-L-histidyl/O-phospho-L-threonyl-[pyruvate, phosphate dikinase] + AMP + H(+). The catalysed reaction is N(tele)-phospho-L-histidyl/O-phospho-L-threonyl-[pyruvate, phosphate dikinase] + phosphate + H(+) = N(tele)-phospho-L-histidyl/L-threonyl-[pyruvate, phosphate dikinase] + diphosphate. In terms of biological role, bifunctional serine/threonine kinase and phosphorylase involved in the regulation of the pyruvate, phosphate dikinase (PPDK) by catalyzing its phosphorylation/dephosphorylation. This Pediococcus pentosaceus (strain ATCC 25745 / CCUG 21536 / LMG 10740 / 183-1w) protein is Putative pyruvate, phosphate dikinase regulatory protein.